The primary structure comprises 76 residues: CLAVATA3/ESR (CLE)-related protein 46 (76 aa).

An N-terminal signal peptide occupies residues 1–26 (MRRHDIIIKLLLLMCLLLSRFVTREC). The tract at residues 53 to 76 (EEKKWHKHPSGPNPTGNRHPPVKH) is disordered. Hydroxyproline occurs at positions 61 and 64. O-linked (Ara...) hydroxyproline glycosylation occurs at Pro64.

Belongs to the CLV3/ESR signal peptide family. The O-glycosylation (arabinosylation) of the hydroxyproline Pro-64 enhances binding affinity of the CLE46p peptide for its receptor.

It is found in the secreted. Its subcellular location is the extracellular space. Functionally, extracellular signal peptide that regulates cell fate. This Arabidopsis thaliana (Mouse-ear cress) protein is CLAVATA3/ESR (CLE)-related protein 46.